We begin with the raw amino-acid sequence, 297 residues long: Protease HtpX homolog (297 aa).

Helical transmembrane passes span 5-25 (IFLF…VLTI) and 43-63 (LMAL…ISLG). H154 provides a ligand contact to Zn(2+). E155 is a catalytic residue. H158 serves as a coordination point for Zn(2+). 2 helical membrane passes run 169 to 189 (LLQG…AWVA) and 203 to 223 (FIAM…VVFA). E229 contributes to the Zn(2+) binding site.

This sequence belongs to the peptidase M48B family. Zn(2+) serves as cofactor.

The protein localises to the cell membrane. This Bacillus velezensis (strain DSM 23117 / BGSC 10A6 / LMG 26770 / FZB42) (Bacillus amyloliquefaciens subsp. plantarum) protein is Protease HtpX homolog.